A 397-amino-acid polypeptide reads, in one-letter code: Phosphoglycerate kinase (397 aa).

Residues 21–23, arginine 36, 59–62, arginine 119, and arginine 156 each bind substrate; these read DFN and HLGR. ATP is bound by residues lysine 207, glycine 295, glutamate 326, and 353 to 356; that span reads GGDS.

The protein belongs to the phosphoglycerate kinase family. As to quaternary structure, monomer.

The protein localises to the cytoplasm. It catalyses the reaction (2R)-3-phosphoglycerate + ATP = (2R)-3-phospho-glyceroyl phosphate + ADP. Its pathway is carbohydrate degradation; glycolysis; pyruvate from D-glyceraldehyde 3-phosphate: step 2/5. In Enterococcus faecalis (strain ATCC 700802 / V583), this protein is Phosphoglycerate kinase.